Here is a 230-residue protein sequence, read N- to C-terminus: Modulator of macroautophagy TMEM150B (230 aa).

Residue Met1 is a topological domain, cytoplasmic. Residues 2–22 (WAWALLPICLTIWATAGIWIV) traverse the membrane as a helical segment. Residues 23 to 50 (YGMSVSNGSVNLTDGFPFISLCGTYPPQ) are Extracellular-facing. Residues Asn29 and Asn33 are each glycosylated (N-linked (GlcNAc...) asparagine). Residues 51–71 (SCVFGQVLNVGAMLGVWISVI) traverse the membrane as a helical segment. Over 72–83 (RFQQIRDYGCHS) the chain is Cytoplasmic. A helical membrane pass occupies residues 84–104 (VLNSVSLAMGLLCALGTSIVG). The Extracellular segment spans residues 105–115 (NFQQSNQLETH). The chain crosses the membrane as a helical span at residues 116–136 (LAGAFLAFVIGNIYFWMQTVL). Topologically, residues 137-150 (TYMVKPKHGGCYIG) are cytoplasmic. A helical membrane pass occupies residues 151–171 (PIRFCLSVACTALIVLMAVFL). Residues 172–183 (KLNMKSISAICE) are Extracellular-facing. Residues 184 to 204 (WIVAMILFLLYGLFSVDFWHL) form a helical membrane-spanning segment. Over 205 to 230 (DGHYFHVKKRTAIPNEVEVSTVTLNI) the chain is Cytoplasmic.

The protein belongs to the DRAM/TMEM150 family.

It localises to the cell membrane. The protein localises to the endosome membrane. It is found in the cytoplasmic vesicle. The protein resides in the autophagosome membrane. Its function is as follows. Modulator of macroautophagy that causes accumulation of autophagosomes under basal conditions and enhances autophagic flux. Represses cell death and promotes long-term clonogenic survival of cells grown in the absence of glucose in a macroautophagy-independent manner. May have some role in extracellular matrix engulfment or growth factor receptor recycling, both of which can modulate cell survival. This Xenopus tropicalis (Western clawed frog) protein is Modulator of macroautophagy TMEM150B.